The chain runs to 141 residues: uncharacterized protein (141 aa).

The region spanning 8 to 112 (IGQVFKTKSL…VLDKQPKRNE (105 aa)) is the MaoC-like domain.

This is an uncharacterized protein from Bacillus subtilis (strain 168).